A 257-amino-acid polypeptide reads, in one-letter code: Adenylate kinase (257 aa).

52–57 (GAGKGT) provides a ligand contact to ATP. Residues 72–101 (ATGDMLRSQVAKKTELGKEAKKIMDQGGLV) are NMP. AMP is bound by residues Thr73, Arg78, 99 to 101 (GLV), 128 to 131 (GFPR), and Gln135. The segment at 169-206 (GRLVHPASGRSYHKIFNPPKNEMLDDITGEPLIQRSDD) is LID. Residues Arg170 and 179–180 (SY) contribute to the ATP site. 2 residues coordinate AMP: Arg203 and Arg214. Gln242 lines the ATP pocket.

The protein belongs to the adenylate kinase family. AK2 subfamily. As to quaternary structure, monomer.

The protein resides in the cytoplasm. The protein localises to the cytosol. It localises to the mitochondrion intermembrane space. The enzyme catalyses AMP + ATP = 2 ADP. In terms of biological role, catalyzes the reversible transfer of the terminal phosphate group between ATP and AMP. Plays an important role in cellular energy homeostasis and in adenine nucleotide metabolism. Adenylate kinase activity is critical for regulation of the phosphate utilization and the AMP de novo biosynthesis pathways. The polypeptide is Adenylate kinase (adk1) (Aspergillus clavatus (strain ATCC 1007 / CBS 513.65 / DSM 816 / NCTC 3887 / NRRL 1 / QM 1276 / 107)).